A 479-amino-acid chain; its full sequence is Alpha,alpha-trehalose-phosphate synthase [UDP-forming] 2 (479 aa).

Positions 96 and 150 each coordinate D-glucose 6-phosphate. The UDP site is built by R287 and K292. Residues R287 and K292 each contribute to the UDP-alpha-D-glucose site. Residue R325 participates in D-glucose 6-phosphate binding. Residues 363 to 364 (SV) and 390 to 394 (LVSFE) contribute to the UDP site. 386–394 (DGMNLVSFE) contacts UDP-alpha-D-glucose.

This sequence belongs to the glycosyltransferase 20 family.

The enzyme catalyses D-glucose 6-phosphate + UDP-alpha-D-glucose = alpha,alpha-trehalose 6-phosphate + UDP + H(+). Its pathway is carbohydrate biosynthesis. Its function is as follows. Synthase catalytic subunit of the trehalose synthase complex that catalyzes the production of trehalose from glucose-6-phosphate and UDP-alpha-D-glucose in a two step process. The disaccharide trehalose serves as a storage carbohydrate that is mobilized during conidial germination. Regulates the level of trehalose as a protectant for cell integrity during thermal and oxidative stress. In Aspergillus fumigatus (strain ATCC MYA-4609 / CBS 101355 / FGSC A1100 / Af293) (Neosartorya fumigata), this protein is Alpha,alpha-trehalose-phosphate synthase [UDP-forming] 2.